The following is a 446-amino-acid chain: 5-hydroxytryptamine receptor (446 aa).

Residues 1-65 (MEGAEGQEEL…AALVRAAAKA (65 aa)) are Extracellular-facing. Asparagine 23, asparagine 27, asparagine 36, and asparagine 42 each carry an N-linked (GlcNAc...) asparagine glycan. A helical membrane pass occupies residues 66–88 (VVLGLLILATVVGNVFVIAAILL). The Cytoplasmic segment spans residues 89–98 (ERHLRSAANN). The chain crosses the membrane as a helical span at residues 99–120 (LILSLAVADLLVACLVMPLGAV). Over 121–135 (YEVVQRWTLGPELCD) the chain is Extracellular. Cysteine 134 and cysteine 214 are disulfide-bonded. A helical membrane pass occupies residues 136-157 (MWTSGDVLCCTASILHLVAIAL). Topologically, residues 158 to 176 (DRYWAVTNIDYIHASTAKR) are cytoplasmic. The chain crosses the membrane as a helical span at residues 177 to 199 (VGMMIACVWTVSFFVCIAQLLGW). At 200 to 227 (KDPDWNQRVSEDLRCVVSQDVGYQIFAT) the chain is on the extracellular side. The chain crosses the membrane as a helical span at residues 228–249 (ASSFYVPVLIILILYWRIYQTA). Topologically, residues 250–367 (RKRIRRRRGA…SKRERKAAKT (118 aa)) are cytoplasmic. The span at 304 to 324 (TTTGFTNVSSNNTSPEKQSCA) shows a compositional bias: polar residues. The disordered stretch occupies residues 304–329 (TTTGFTNVSSNNTSPEKQSCANGLEA). The chain crosses the membrane as a helical span at residues 368–391 (LAIITGAFVACWLPFFVLAILVPT). At 392 to 399 (CDCEVSPV) the chain is on the extracellular side. A helical membrane pass occupies residues 400 to 422 (LTSLSLWLGYFNSTLNPVIYTVF). The Cytoplasmic portion of the chain corresponds to 423-446 (SPEFRHAFQRLLCGRRVRRRRAPQ).

It belongs to the G-protein coupled receptor 1 family.

It localises to the cell membrane. Its function is as follows. This is a receptor for 5-hydroxytryptamine (serotonin), a biogenic hormone that function as a neurotransmitter, a hormone, and a mitogen. The polypeptide is 5-hydroxytryptamine receptor (Bombyx mori (Silk moth)).